The sequence spans 947 residues: MIKLDWNEYLEKAAEVNAEGAVLLVNNGVLPLDKNAVTQVFGRIQLDYYKSGTGSGGMVNVAKVTGITDGLIEAGAKLNEDVLKAYKDYVAEHPYDYGEGWGGEPWCQEEMPLDDSLVKRAAESSDTAICIIGRTAGEEQDNSCKAGSYLLTDGEKAILRKVRDNFSKMVILLNVGNIIDMGFIDEFSPDAVMYVWQGGMTGGTGTARVLLGEVSPCGKLPDTIAYDITDYPSDKNFHNRDVDIYAEDIFVGYRYFDTFAKDRVRFPFGYGLSYTQFEISAEGRKTDDGVVITAKVKNIGSAAGKEVVQVYLEAPNCKLGKAARVLCGFEKTKVLAPNEEQTLTIEVTERDIASYDDSGITGNAFAWVEEAGEYTFYAGSDVRSAKECFAFTLDSTKVIEQLEQALAPVTPFKRMVRTAEGLSYEDTPLSKVDEAARRLGYLPAETAYTGDKGIALSDVAHGKNTLDEFIAQLDDNDLNCLVRGEGMCSPKVTPGTAAAFGGVAKHLEELGIPAGCCSDGPSGMRLDVGTKAFSLPNGTLIAATFNKSLITELFTYLGLEMRANKVDCLLGPGMNIHRHPLNGRNFEYFSEDPFLTGTMAAAELEGLHSVGVEGTIKHFCANNQETNRHFIDSVASERALREIYLKGFEIAVRKSKARSVMTTYGKVNGLWTAGSFDLNTMILRKQWGFDGFTMTDWWANINDRGCAPDKNNFAAMVRAQNDVYMVCADGESGSDNVIAALADGRLTRAELQRSARNILSFMMSTHAMARKLGEDEAVEVINKPAETVDDGEGDRVFLLDGDLTIDMSGVKTERNLDYSFTVDVAQFGQYRMEMTASSTQSELAQMPVTVFSMGTAWGTFTWNGTGGKPVTFAVEEMPMFSRYTIFRLHFGLGGLDMDKIVFKKIRPAEAQVCRLRISERWLQTQTYFWLKANFQSKKLLRGRRAYR.

The active site involves Asp696.

Belongs to the glycosyl hydrolase 3 family.

The enzyme catalyses Hydrolysis of terminal, non-reducing beta-D-glucosyl residues with release of beta-D-glucose.. The protein operates within glycan metabolism; cellulose degradation. In Ruminococcus albus, this protein is Beta-glucosidase.